The following is a 527-amino-acid chain: Transcription factor RBF1 (527 aa).

Disordered regions lie at residues 1-36 (MSSN…IGAS), 258-281 (ANLY…HNEE), 328-365 (HHLL…QQAA), 395-433 (QLSQ…HGLD), and 470-527 (TQGN…SGFL). Residues 160–300 (HVRDALTTDE…LRMINPQHNH (141 aa)) mediate DNA binding. Positions 263–281 (NEKDQKRKNKPDEPGHNEE) are enriched in basic and acidic residues. Composition is skewed to low complexity over residues 332-365 (QQEQ…QQAA) and 395-428 (QLSQ…PQQT).

It belongs to the RBF1 family.

The protein resides in the nucleus. It is found in the chromosome. The protein localises to the telomere. Its function is as follows. Transcriptional activator that binds to the RPG box and to telomeres. Involved in the regulation of the transition between yeast and filamentous forms and plays a role in virulence. Induces expression of HWP1, a major hyphal cell protein and virulence factor. The chain is Transcription factor RBF1 (RBF1) from Candida albicans (Yeast).